The chain runs to 239 residues: MRPSNRTPEQNREIKITRHYTDYAEGSVLIEMGNTKVLCNASVSGSVPRFLKGKGKGWVTAEYAMLPRATHIRNMREAAKGKQGGRTLEIQRLIARSLRAAVDLNALGENMITVDCDVIQADGGTRTAAITGGCIALADALNWMVKKGKLKKSPLKQMIAAVSVGIYQGTPVCDLDYAEDSNAETDTNVVMTESGGLIEIQATAEDGAFSHEQLLSMLSLAKGGIEALVVEQKKALNAE.

Residues Arg86 and 124 to 126 (GTR) each bind phosphate.

It belongs to the RNase PH family. As to quaternary structure, homohexameric ring arranged as a trimer of dimers.

The enzyme catalyses tRNA(n+1) + phosphate = tRNA(n) + a ribonucleoside 5'-diphosphate. Functionally, phosphorolytic 3'-5' exoribonuclease that plays an important role in tRNA 3'-end maturation. Removes nucleotide residues following the 3'-CCA terminus of tRNAs; can also add nucleotides to the ends of RNA molecules by using nucleoside diphosphates as substrates, but this may not be physiologically important. Probably plays a role in initiation of 16S rRNA degradation (leading to ribosome degradation) during starvation. This Psychromonas ingrahamii (strain DSM 17664 / CCUG 51855 / 37) protein is Ribonuclease PH.